The chain runs to 662 residues: PsbB mRNA maturation factor Mbb1, chloroplastic (662 aa).

Residues 1–50 (MSLVPFSQLWRGVRTRGPVEQASSSSSSSSSSRRTWYAPARSQTGVQVAA) constitute a chloroplast transit peptide. Disordered regions lie at residues 14-38 (RTRG…TWYA) and 75-101 (IIAD…RDEA). Over residues 23 to 32 (SSSSSSSSSS) the composition is skewed to low complexity. Residues 88–101 (EGERGDATGSRDEA) show a composition bias toward basic and acidic residues. TPR repeat units lie at residues 126–160 (SRIR…DPAD), 161–194 (PRAY…TGNV), 196–229 (PYIW…DGTH), 231–263 (CAWH…CRRK), 269–302 (AYLY…AEGA), 305–338 (VALW…NPRS), 339–372 (RYVH…NPTD), 373–406 (PALY…DPSD), 408–440 (YMWQ…DPRS), and 444–477 (VYVF…DPKS). Disordered regions lie at residues 540–563 (SDGN…EAAA) and 598–662 (LPDF…RSMG).

Part of a 300 kDa complex that associates with RNA.

It localises to the plastid. The protein resides in the chloroplast stroma. In terms of biological role, involved, directly or indirectly, in the processing of the chloroplast encoded psbB mRNA to its mature form, acting via the 5'-UTR of the psbB mRNA. The protein is PsbB mRNA maturation factor Mbb1, chloroplastic (MBB1) of Chlamydomonas reinhardtii (Chlamydomonas smithii).